The following is a 117-amino-acid chain: Eukaryotic translation initiation factor 4E-binding protein 1 (117 aa).

Polar residues-rich tracts occupy residues 1-12 and 33-47; these read MSAGSSCSQTPS and YSTT…TTPG. The disordered stretch occupies residues 1–47; sequence MSAGSSCSQTPSRAIPTRRVALGDGVQLPPGDYSTTPGGTLFSTTPG. Ser-2 carries the N-acetylserine modification. Phosphothreonine occurs at positions 36 and 40. The residue at position 43 (Ser-43) is a Phosphoserine. Residue Thr-45 is modified to Phosphothreonine; by MTOR. Phosphothreonine is present on Thr-49. Tyr-53 is subject to Phosphotyrosine. Residues 53–59 carry the YXXXXLphi motif motif; that stretch reads YDRKFLM. Lys-56 participates in a covalent cross-link: Glycyl lysine isopeptide (Lys-Gly) (interchain with G-Cter in ubiquitin). Ser-64 bears the Phosphoserine; by DYRK2, MAPK1, MAPK3 and MTOR mark. The tract at residues 64 to 117 is disordered; it reads SPVAKTPPKDLPTIPGVTSPTSDEPPMQASQSHLHSSPEDKRAGGEESQFEMDI. Thr-69 carries the post-translational modification Phosphothreonine; by MTOR. Thr-76 is modified (phosphothreonine). A compositionally biased stretch (polar residues) spans 79–98; sequence GVTSPTSDEPPMQASQSHLH. Residues Ser-82, Ser-95, and Ser-99 each carry the phosphoserine modification. A compositionally biased stretch (basic and acidic residues) spans 99–108; sequence SSPEDKRAGG. Ser-100 is modified (phosphoserine; by DYRK2). Phosphoserine is present on Ser-111. A TOS motif motif is present at residues 113 to 117; sequence FEMDI.

This sequence belongs to the eIF4E-binding protein family. In terms of assembly, hypophosphorylated EIF4EBP1 competes with EIF4G1/EIF4G3 to interact with EIF4E; insulin stimulated MAP-kinase (MAPK1 and MAPK3) or mTORC1 phosphorylation of EIF4EBP1 causes dissociation of the complex allowing EIF4G1/EIF4G3 to bind and consequent initiation of translation. Interacts (via TOS motif) with RPTOR; promoting phosphorylation by mTORC1. Post-translationally, phosphorylated on serine and threonine residues in response to insulin, EGF and PDGF. Phosphorylation at Thr-36, Thr-45, Ser-64 and Thr-69, corresponding to the hyperphosphorylated form, is regulated by mTORC1 and abolishes binding to EIF4E. Ubiquitinated: when eIF4E levels are low, hypophosphorylated form is ubiquitinated by the BCR(KLHL25) complex, leading to its degradation and serving as a homeostatic mechanism to maintain translation and prevent eIF4E inhibition when eIF4E levels are low. Not ubiquitinated when hyperphosphorylated (at Thr-36, Thr-45, Ser-64 and Thr-69) or associated with eIF4E. In terms of tissue distribution, expressed in all tissues examined; highest levels in fat and skeletal tissue, lowest levels in kidney.

It is found in the cytoplasm. The protein resides in the nucleus. In terms of biological role, repressor of translation initiation that regulates EIF4E activity by preventing its assembly into the eIF4F complex: hypophosphorylated form competes with EIF4G1/EIF4G3 and strongly binds to EIF4E, leading to repress translation. In contrast, hyperphosphorylated form dissociates from EIF4E, allowing interaction between EIF4G1/EIF4G3 and EIF4E, leading to initiation of translation. Mediates the regulation of protein translation by hormones, growth factors and other stimuli that signal through the MAP kinase and mTORC1 pathways. This is Eukaryotic translation initiation factor 4E-binding protein 1 (Eif4ebp1) from Rattus norvegicus (Rat).